Reading from the N-terminus, the 147-residue chain is MSKALIKFIRLSPTKARLIAREVQGMNAELAMASLKFMPNKGAKYIANAISSAVANGGFEANEVVVKSCRVDAAAVLKRFRPRARGSASRIRKPTSHILVEVAKAEVKAEEKKTVAKKAPAAKKTTTTKAPAKKTTSTKKATAKKES.

The segment at 110 to 147 (EEKKTVAKKAPAAKKTTTTKAPAKKTTSTKKATAKKES) is disordered. Low complexity predominate over residues 117–140 (KKAPAAKKTTTTKAPAKKTTSTKK).

This sequence belongs to the universal ribosomal protein uL22 family. Part of the 50S ribosomal subunit.

Functionally, this protein binds specifically to 23S rRNA; its binding is stimulated by other ribosomal proteins, e.g. L4, L17, and L20. It is important during the early stages of 50S assembly. It makes multiple contacts with different domains of the 23S rRNA in the assembled 50S subunit and ribosome. The globular domain of the protein is located near the polypeptide exit tunnel on the outside of the subunit, while an extended beta-hairpin is found that lines the wall of the exit tunnel in the center of the 70S ribosome. This chain is Large ribosomal subunit protein uL22, found in Campylobacter jejuni subsp. jejuni serotype O:23/36 (strain 81-176).